The following is a 37-amino-acid chain: Large ribosomal subunit protein bL36 (37 aa).

This sequence belongs to the bacterial ribosomal protein bL36 family.

The protein is Large ribosomal subunit protein bL36 of Chromobacterium violaceum (strain ATCC 12472 / DSM 30191 / JCM 1249 / CCUG 213 / NBRC 12614 / NCIMB 9131 / NCTC 9757 / MK).